Consider the following 37-residue polypeptide: Protein 6.3 (37 aa).

This Escherichia phage T7 (Bacteriophage T7) protein is Protein 6.3.